Here is a 355-residue protein sequence, read N- to C-terminus: Trans-3-hydroxy-L-proline dehydratase (355 aa).

The active-site Proton acceptor is the Cys111. Residues Gly112–His113 and Gly276–Ser277 contribute to the substrate site.

It belongs to the proline racemase family. In terms of assembly, homodimer.

It catalyses the reaction trans-3-hydroxy-L-proline = 1-pyrroline-2-carboxylate + H2O. Its function is as follows. Catalyzes the dehydration of trans-3-hydroxy-L-proline (t3LHyp) to Delta(1)-pyrroline-2-carboxylate (Pyr2C). Together with LhpI, is involved in a metabolic pathway that converts t3LHyp to L-proline. This chain is Trans-3-hydroxy-L-proline dehydratase, found in Colwellia psychrerythraea (strain 34H / ATCC BAA-681) (Vibrio psychroerythus).